Reading from the N-terminus, the 308-residue chain is tRNA pseudouridine synthase B (308 aa).

The active-site Nucleophile is the Asp48.

The protein belongs to the pseudouridine synthase TruB family. Type 1 subfamily.

It carries out the reaction uridine(55) in tRNA = pseudouridine(55) in tRNA. In terms of biological role, responsible for synthesis of pseudouridine from uracil-55 in the psi GC loop of transfer RNAs. The polypeptide is tRNA pseudouridine synthase B (Histophilus somni (strain 129Pt) (Haemophilus somnus)).